The following is a 63-amino-acid chain: Bowman-Birk type proteinase inhibitor (63 aa).

Disulfide bonds link Cys8–Cys61, Cys9–Cys24, Cys12–Cys57, Cys14–Cys22, Cys31–Cys38, Cys35–Cys50, and Cys40–Cys48.

Belongs to the Bowman-Birk serine protease inhibitor family.

In terms of biological role, this inhibitor has two domains, each with separate antiprotease activity. Inhibits bovine trypsin and chymotrypsin, in a molar ratio of 1:1. The trypsin inhibition of FBI is independent of chymotrypsin inhibition, but the chymotrypsin inhibition is not completely independent of trypsin inhibition. The sequence is that of Bowman-Birk type proteinase inhibitor from Vicia faba (Broad bean).